Consider the following 576-residue polypeptide: TRAF-type zinc finger domain-containing protein 1 (576 aa).

N-acetylalanine is present on Ala2. The TRAF-type zinc finger occupies 27–103 (IHEIHCQRNI…DLELSVVKLK (77 aa)). Phosphoserine occurs at positions 278, 320, 326, 327, 409, 415, 430, and 450. The tract at residues 402-432 (EGIPTQDSQPEDRSPELSRRRVKHQGDLSSG) is disordered. Basic and acidic residues predominate over residues 411–420 (PEDRSPELSR). Disordered regions lie at residues 465–491 (LNSS…GSQD) and 529–576 (HGSP…EEEE). At Ser531 the chain carries Phosphoserine. Residues 540 to 552 (GSRSSRVTPTAAS) show a composition bias toward polar residues.

As to quaternary structure, interacts with MAVS, TICAM1, TRAF1, TRAF2, TRAF3 and TRAF6. As to expression, expressed in vascular smooth muscle cells.

Negative feedback regulator that controls excessive innate immune responses. Regulates both Toll-like receptor 4 (TLR4) and DDX58/RIG1-like helicases (RLH) pathways. May inhibit the LTR pathway by direct interaction with TRAF6 and attenuation of NF-kappa-B activation. May negatively regulate the RLH pathway downstream from MAVS and upstream of NF-kappa-B and IRF3. In Rattus norvegicus (Rat), this protein is TRAF-type zinc finger domain-containing protein 1 (Trafd1).